Here is a 62-residue protein sequence, read N- to C-terminus: Alpha-elapitoxin-Nn2a (62 aa).

Residues 1-20 (LECHNQQSSQTPTTTDCSGG) are disordered. 4 disulfide bridges follow: Cys-3/Cys-24, Cys-17/Cys-41, Cys-43/Cys-54, and Cys-55/Cys-60.

It belongs to the three-finger toxin family. Short-chain subfamily. Type I alpha-neurotoxin sub-subfamily. Expressed by the venom gland.

The protein localises to the secreted. In terms of biological role, nicotinic acetylcholine receptor antagonist. Binds to muscle nicotinic acetylcholine receptor (nAChR) and inhibits acetylcholine from binding to the receptor, thereby impairing neuromuscular transmission. Produces peripheral paralysis by blocking neuromuscular transmission at the postsynaptic site. Induces concentration-dependent inhibition of indirect twitches and abolishes contractile responses of tissues to exogenous acetylcholine and carbachol, in the chick biventer cervicis nerve-muscle preparation at 100-300 nM (in vitro). Prior incubation of tissues with Indian polyvalent antivenom (1 ml/0.6 mg) prevents the neurotoxic effects at 100 nM (in vitro). Addition of Indian polyvalent antivenom (1 ml/0.6 mg) at the t90 time point does not reverse the neurotoxic effects (in vitro). Displays non-competitive antagonism of concentration-response curves to carbachol, with a pA2 of 8.01 (in vitro). The chain is Alpha-elapitoxin-Nn2a from Naja naja (Indian cobra).